A 169-amino-acid polypeptide reads, in one-letter code: Peptide deformylase (169 aa).

Positions 91 and 133 each coordinate Fe cation. Residue glutamate 134 is part of the active site. Histidine 137 provides a ligand contact to Fe cation.

The protein belongs to the polypeptide deformylase family. Fe(2+) is required as a cofactor.

The enzyme catalyses N-terminal N-formyl-L-methionyl-[peptide] + H2O = N-terminal L-methionyl-[peptide] + formate. In terms of biological role, removes the formyl group from the N-terminal Met of newly synthesized proteins. Requires at least a dipeptide for an efficient rate of reaction. N-terminal L-methionine is a prerequisite for activity but the enzyme has broad specificity at other positions. This chain is Peptide deformylase, found in Escherichia coli (strain SMS-3-5 / SECEC).